The following is a 391-amino-acid chain: Anhydro-N-acetylmuramic acid kinase (391 aa).

9–16 (GTSVDGID) is an ATP binding site.

The protein belongs to the anhydro-N-acetylmuramic acid kinase family.

It carries out the reaction 1,6-anhydro-N-acetyl-beta-muramate + ATP + H2O = N-acetyl-D-muramate 6-phosphate + ADP + H(+). It functions in the pathway amino-sugar metabolism; 1,6-anhydro-N-acetylmuramate degradation. Its pathway is cell wall biogenesis; peptidoglycan recycling. Functionally, catalyzes the specific phosphorylation of 1,6-anhydro-N-acetylmuramic acid (anhMurNAc) with the simultaneous cleavage of the 1,6-anhydro ring, generating MurNAc-6-P. Is required for the utilization of anhMurNAc either imported from the medium or derived from its own cell wall murein, and thus plays a role in cell wall recycling. This is Anhydro-N-acetylmuramic acid kinase from Gloeothece citriformis (strain PCC 7424) (Cyanothece sp. (strain PCC 7424)).